The primary structure comprises 376 residues: UDP-N-acetylglucosamine 2-epimerase (376 aa).

Substrate contacts are provided by residues Arg10, Lys15, Asp95, Glu117, His213, Gln271, Phe276, 290-292 (SGG), Glu296, and Arg313.

Belongs to the UDP-N-acetylglucosamine 2-epimerase family. Homodimer.

It localises to the cytoplasm. It catalyses the reaction UDP-N-acetyl-alpha-D-glucosamine = UDP-N-acetyl-alpha-D-mannosamine. Its pathway is bacterial outer membrane biogenesis; enterobacterial common antigen biosynthesis. In terms of biological role, catalyzes the reversible epimerization at C-2 of UDP-N-acetylglucosamine (UDP-GlcNAc) and thereby provides bacteria with UDP-N-acetylmannosamine (UDP-ManNAc), the activated donor of ManNAc residues. In Yersinia pestis, this protein is UDP-N-acetylglucosamine 2-epimerase.